We begin with the raw amino-acid sequence, 303 residues long: Lipoyl synthase (303 aa).

The [4Fe-4S] cluster site is built by cysteine 40, cysteine 45, cysteine 51, cysteine 67, cysteine 71, cysteine 74, and serine 280. Positions 53–269 constitute a Radical SAM core domain; that stretch reads AVRKTATFMI…KEIALSKGFS (217 aa).

This sequence belongs to the radical SAM superfamily. Lipoyl synthase family. The cofactor is [4Fe-4S] cluster.

The protein localises to the cytoplasm. The catalysed reaction is [[Fe-S] cluster scaffold protein carrying a second [4Fe-4S](2+) cluster] + N(6)-octanoyl-L-lysyl-[protein] + 2 oxidized [2Fe-2S]-[ferredoxin] + 2 S-adenosyl-L-methionine + 4 H(+) = [[Fe-S] cluster scaffold protein] + N(6)-[(R)-dihydrolipoyl]-L-lysyl-[protein] + 4 Fe(3+) + 2 hydrogen sulfide + 2 5'-deoxyadenosine + 2 L-methionine + 2 reduced [2Fe-2S]-[ferredoxin]. It participates in protein modification; protein lipoylation via endogenous pathway; protein N(6)-(lipoyl)lysine from octanoyl-[acyl-carrier-protein]. Catalyzes the radical-mediated insertion of two sulfur atoms into the C-6 and C-8 positions of the octanoyl moiety bound to the lipoyl domains of lipoate-dependent enzymes, thereby converting the octanoylated domains into lipoylated derivatives. The chain is Lipoyl synthase from Halalkalibacterium halodurans (strain ATCC BAA-125 / DSM 18197 / FERM 7344 / JCM 9153 / C-125) (Bacillus halodurans).